Here is a 234-residue protein sequence, read N- to C-terminus: Thymidylate kinase (234 aa).

Gly21 to Ser28 is a binding site for ATP.

This sequence belongs to the thymidylate kinase family.

It carries out the reaction dTMP + ATP = dTDP + ADP. Its function is as follows. Phosphorylation of dTMP to form dTDP in both de novo and salvage pathways of dTTP synthesis. The sequence is that of Thymidylate kinase from Rhizobium meliloti (strain 1021) (Ensifer meliloti).